The sequence spans 94 residues: Large ribosomal subunit protein bL27 (94 aa).

The propeptide occupies 1 to 9 (MLELNLQLF). The tract at residues 12–33 (KKGGGSTSNGRDSQAKRLGAKA) is disordered.

The protein belongs to the bacterial ribosomal protein bL27 family. In terms of processing, the N-terminus is cleaved by ribosomal processing cysteine protease Prp.

The sequence is that of Large ribosomal subunit protein bL27 from Lactococcus lactis subsp. lactis (strain IL1403) (Streptococcus lactis).